Reading from the N-terminus, the 240-residue chain is Uridylate kinase (240 aa).

Position 13-16 (13-16 (KFSG)) interacts with ATP. Glycine 55 contacts UMP. Residues glycine 56 and arginine 60 each coordinate ATP. Residues aspartate 76 and 137–144 (TGNPFFTT) contribute to the UMP site. ATP-binding residues include threonine 164, tyrosine 170, and aspartate 173.

It belongs to the UMP kinase family. Homohexamer.

The protein resides in the cytoplasm. It catalyses the reaction UMP + ATP = UDP + ADP. The protein operates within pyrimidine metabolism; CTP biosynthesis via de novo pathway; UDP from UMP (UMPK route): step 1/1. Inhibited by UTP. Its function is as follows. Catalyzes the reversible phosphorylation of UMP to UDP. The chain is Uridylate kinase from Helicobacter pylori (strain HPAG1).